Consider the following 528-residue polypeptide: Probable serine/threonine-protein kinase 380R (528 aa).

The interval 70–96 (VKIPKSKSPPKVKSPKRKKSPVRRRVS) is disordered. The segment covering 73 to 95 (PKSKSPPKVKSPKRKKSPVRRRV) has biased composition (basic residues). In terms of domain architecture, Protein kinase spans 156 to 507 (FTNVKAVGKG…LANVLIHKIF (352 aa)). ATP is bound by residues 162-170 (VGKGSFGTV) and Lys-187. Catalysis depends on Asp-302, which acts as the Proton acceptor.

This sequence belongs to the protein kinase superfamily. Ser/Thr protein kinase family.

The catalysed reaction is L-seryl-[protein] + ATP = O-phospho-L-seryl-[protein] + ADP + H(+). The enzyme catalyses L-threonyl-[protein] + ATP = O-phospho-L-threonyl-[protein] + ADP + H(+). This is Probable serine/threonine-protein kinase 380R from Invertebrate iridescent virus 6 (IIV-6).